A 1449-amino-acid polypeptide reads, in one-letter code: VWFA and cache domain-containing protein CG16868 (1449 aa).

Residues 1 to 23 (MWPNSNLNAVLLILAVLACPTSS) form the signal peptide. Topologically, residues 24-1220 (QHVPLAMANS…NPQREQHAYS (1197 aa)) are extracellular. Asparagine 32, asparagine 112, asparagine 153, asparagine 407, asparagine 447, and asparagine 497 each carry an N-linked (GlcNAc...) asparagine glycan. A VWFA domain is found at 320-541 (FVLFLIDVGS…TSLPQTSSRI (222 aa)). Positions 557-639 (VHPPVVDADS…PRPLIQRETS (83 aa)) constitute a Cache 1 domain. 3 N-linked (GlcNAc...) asparagine glycosylation sites follow: asparagine 649, asparagine 668, and asparagine 707. Residues 889-934 (TAPYLDAGGAGYIITIAHTIFEGKAHALHSAQQDRPVAVVALDVPY) enclose the Cache 2 domain. Residues asparagine 1015, asparagine 1025, asparagine 1059, and asparagine 1111 are each glycosylated (N-linked (GlcNAc...) asparagine). The helical transmembrane segment at 1221–1241 (AFGPLGGAIVVLVMVIGFAIY) threads the bilayer. The Cytoplasmic portion of the chain corresponds to 1242-1449 (CYRHNLDAQT…VHRHMETAES (208 aa)). 2 disordered regions span residues 1307–1339 (YHVS…SSDQ) and 1352–1416 (DKRH…GGSV). Residues 1359 to 1369 (DTMSISTSISS) are compositionally biased toward low complexity. Residues 1370–1392 (PTNRQQSSSQPNTHPYLSNQPTS) are compositionally biased toward polar residues.

It belongs to the calcium channel subunit alpha-2/delta family.

Its subcellular location is the membrane. The chain is VWFA and cache domain-containing protein CG16868 from Drosophila melanogaster (Fruit fly).